The primary structure comprises 218 residues: Dual specificity protein phosphatase TpbA (218 aa).

The signal sequence occupies residues 1 to 28 (MHRSPLAWLRLLLAAVLGAFLLGGPLHA). The region spanning 44–188 (DPSINLYRMS…YVRGADVDGL (145 aa)) is the Tyrosine-protein phosphatase domain. Asp105 functions as the Proton donor/acceptor in the catalytic mechanism. Catalysis depends on Cys132, which acts as the Phosphocysteine intermediate.

This sequence belongs to the protein-tyrosine phosphatase family.

Its subcellular location is the periplasm. It carries out the reaction O-phospho-L-tyrosyl-[protein] + H2O = L-tyrosyl-[protein] + phosphate. The catalysed reaction is O-phospho-L-threonyl-[protein] + H2O = L-threonyl-[protein] + phosphate. The enzyme catalyses O-phospho-L-seryl-[protein] + H2O = L-seryl-[protein] + phosphate. Phosphatase that regulates diverse phenotypes in P.aeruginosa via regulation of the concentration of cellular c-di-GMP. Acts by dephosphorylating the membrane-anchored diguanylate cyclase TpbB at tyrosine and serine/threonine sites, leading to inactivation of TpbB and reduced c-di-GMP production. In vitro shows phosphatase activity toward p-nitrophenyl phosphate (pNPP) and tyrosine phosphopeptides. Can efficiently dephosphorylate two phosphorylated peptides derived from the periplasmic domain of TpbB, with a strong preference for Tyr-48 over Tyr-62. In Pseudomonas aeruginosa (strain ATCC 15692 / DSM 22644 / CIP 104116 / JCM 14847 / LMG 12228 / 1C / PRS 101 / PAO1), this protein is Dual specificity protein phosphatase TpbA.